The primary structure comprises 144 residues: Intraflagellar transport protein 25 homolog (144 aa).

3 residues coordinate Ca(2+): Asn-29, Asp-32, and Thr-37.

Belongs to the IFT25 family. As to quaternary structure, component of the IFT complex B, at least composed of IFT20, IFT22, IFT25, IFT27, IFT46, IFT52, TRAF3IP1/IFT54, IFT57, IFT74, IFT80, IFT81, and IFT88. Interacts with IFT27. Interacts with IFT88. In terms of tissue distribution, detected in placenta.

It localises to the cell projection. It is found in the cilium. Component of the IFT complex B required for sonic hedgehog/SHH signaling. May mediate transport of SHH components: required for the export of SMO and PTCH1 receptors out of the cilium and the accumulation of GLI2 at the ciliary tip in response to activation of the SHH pathway, suggesting it is involved in the dynamic transport of SHH signaling molecules within the cilium. Not required for ciliary assembly. Its role in intraflagellar transport is mainly seen in tissues rich in ciliated cells such as kidney and testis. Essential for male fertility, spermiogenesis and sperm flagella formation. Plays a role in the early development of the kidney. May be involved in the regulation of ureteric bud initiation. This is Intraflagellar transport protein 25 homolog from Homo sapiens (Human).